Here is a 159-residue protein sequence, read N- to C-terminus: Transmembrane protein 89 (159 aa).

The signal sequence occupies residues 1–24; sequence MLHVLASLPLLLLLVTSASTHAWS. Residues 25-63 lie on the Extracellular side of the membrane; it reads RPLWYQVGLDLQPWGCQPKSVEGCRGGLSCPGYWLGPGA. A helical membrane pass occupies residues 64–86; the sequence is SRIYPVAAVMITTTMLMICRKIL. Residues 87–159 are Cytoplasmic-facing; that stretch reads QGRRRSQATK…QIKGTSTQSG (73 aa). A disordered region spans residues 91 to 110; sequence RSQATKGEHPQVTTEPCGPW.

It localises to the membrane. This is Transmembrane protein 89 (TMEM89) from Homo sapiens (Human).